Consider the following 158-residue polypeptide: Low molecular weight phosphotyrosine protein phosphatase (158 aa).

Ala-2 carries the post-translational modification N-acetylalanine. The active-site Nucleophile is Cys-13. Arg-19 is a catalytic residue. The Proton donor role is filled by Asp-130. Phosphotyrosine occurs at positions 132 and 133.

This sequence belongs to the low molecular weight phosphotyrosine protein phosphatase family.

It is found in the cytoplasm. The catalysed reaction is O-phospho-L-tyrosyl-[protein] + H2O = L-tyrosyl-[protein] + phosphate. It carries out the reaction a phosphate monoester + H2O = an alcohol + phosphate. Functionally, acts on tyrosine phosphorylated proteins, low-MW aryl phosphates and natural and synthetic acyl phosphates. The sequence is that of Low molecular weight phosphotyrosine protein phosphatase (ACP1) from Gallus gallus (Chicken).